A 520-amino-acid chain; its full sequence is Keratin, type II cytoskeletal 4 (520 aa).

Residues 1-136 (MIARQQCVRG…DPEIQKVRTE (136 aa)) are head. Omega-N-methylarginine is present on Arg-13. The interval 137-172 (EREQIKLLNNKFASFIDKVQFLEQQNKVLETKWNLL) is coil 1A. The 314-residue stretch at 137 to 450 (EREQIKLLNN…KLLEGEEYRM (314 aa)) folds into the IF rod domain. The tract at residues 173-191 (QQQTTTTSSKNLEPLFETY) is linker 1. The segment at 192-284 (LSVLRKQLDT…LYDAELSQMQ (93 aa)) is coil 1B. The interval 285-307 (THVSDTSVVLSMDNNRNLDLDSI) is linker 12. Residues 308-447 (IAEVRAQYEE…TYRKLLEGEE (140 aa)) form a coil 2 region. Residues 448–520 (YRMSGECQSA…ISTTTLNKRR (73 aa)) are tail. The segment at 500-520 (GSVSGSSSSKIISTTTLNKRR) is disordered. Low complexity predominate over residues 503–514 (SGSSSSKIISTT).

This sequence belongs to the intermediate filament family. As to quaternary structure, heterotetramer of two type I and two type II keratins. Keratin-4 is generally associated with keratin-13. As to expression, detected in the suprabasal layer of the stratified epithelium of the esophagus, exocervix, vagina, mouth and lingual mucosa, and in cells and cell clusters in the mucosa and serous gland ducts of the esophageal submucosa (at protein level). Expressed widely in the exocervix and esophageal epithelium, with lowest levels detected in the basal cell layer.

This is Keratin, type II cytoskeletal 4 (KRT4) from Homo sapiens (Human).